The following is a 430-amino-acid chain: MIOREX complex component 4 (430 aa).

A mitochondrion-targeting transit peptide spans 1 to 27; it reads MTVLYTSASLKKMKCLAFNMGMNCVRT. The helical transmembrane segment at 403–420 threads the bilayer; the sequence is FLISLSALLASFFAYYRY.

In terms of assembly, associates with the mitochondrial ribosome.

It is found in the mitochondrion. It localises to the mitochondrion membrane. Its function is as follows. Component of MIOREX complexes, large expressome-like assemblies of ribosomes with factors involved in all the steps of post-transcriptional gene expression. In Saccharomyces cerevisiae (strain ATCC 204508 / S288c) (Baker's yeast), this protein is MIOREX complex component 4.